The following is a 149-amino-acid chain: UPF0260 protein Pmen_1776 (149 aa).

It belongs to the UPF0260 family.

The polypeptide is UPF0260 protein Pmen_1776 (Ectopseudomonas mendocina (strain ymp) (Pseudomonas mendocina)).